A 166-amino-acid polypeptide reads, in one-letter code: MLRGVLGKTFRLVGYTIQYGCIAHCAFEYVGGVVMCSGPSMEPTIQNSDIVFAENLSRHFYGIQRGDIVIAKSPSDPKSNICKRVIGLEGDKILTTSPSDFFKSHSYVPMGHVWLEGDNLQNSTDSRCYGPIPYGLIRGRIFFKIWPLSDFGFLRASPNGHRFSDD.

Active-site residues include Ser40 and Lys83.

This sequence belongs to the peptidase S26 family. IMP1 subfamily. Heterodimer of 2 subunits, IMMPL1 and IMMPL2.

It localises to the mitochondrion inner membrane. Functionally, catalyzes the removal of transit peptides required for the targeting of proteins from the mitochondrial matrix, across the inner membrane, into the inter-membrane space. Known to process the nuclear encoded protein DIABLO. The polypeptide is Mitochondrial inner membrane protease subunit 1 (IMMP1L) (Homo sapiens (Human)).